The following is a 351-amino-acid chain: Pleckstrin (351 aa).

Residues 4–101 (KRIREGYLVK…WVRDTKKAIK (98 aa)) form the PH 1 domain. The residue at position 64 (Lys64) is an N6-acetyllysine. Ser113 and Ser117 each carry phosphoserine. The region spanning 136-221 (IEKGIKELNL…NPDAFYYFPD (86 aa)) is the DEP domain. Positions 244 to 348 (VIIKQGCLLK…WIKAIQVASR (105 aa)) constitute a PH 2 domain.

In terms of biological role, major protein kinase C substrate of platelets. The polypeptide is Pleckstrin (PLEK) (Canis lupus familiaris (Dog)).